Consider the following 247-residue polypeptide: Flavin-dependent thymidylate synthase (247 aa).

One can recognise a ThyX domain in the interval 1 to 237 (MRVRLLEATE…PHTFEYYDAE (237 aa)). DUMP contacts are provided by residues 85-88 (QLTR), 98-100 (SMR), and arginine 176. 88–90 (RHR) is an FAD binding site. The ThyX motif motif lies at 88–98 (RHRHASFDVQS). FAD contacts are provided by residues 192–194 (NPR) and histidine 198. Arginine 203 is a binding site for dUMP. The active-site Involved in ionization of N3 of dUMP, leading to its activation is arginine 203.

The protein belongs to the thymidylate synthase ThyX family. Homotetramer. FAD is required as a cofactor.

The enzyme catalyses dUMP + (6R)-5,10-methylene-5,6,7,8-tetrahydrofolate + NADPH + H(+) = dTMP + (6S)-5,6,7,8-tetrahydrofolate + NADP(+). It participates in pyrimidine metabolism; dTTP biosynthesis. Catalyzes the reductive methylation of 2'-deoxyuridine-5'-monophosphate (dUMP) to 2'-deoxythymidine-5'-monophosphate (dTMP) while utilizing 5,10-methylenetetrahydrofolate (mTHF) as the methyl donor, and NADPH and FADH(2) as the reductant. The polypeptide is Flavin-dependent thymidylate synthase (Halobacterium salinarum (strain ATCC 700922 / JCM 11081 / NRC-1) (Halobacterium halobium)).